A 176-amino-acid polypeptide reads, in one-letter code: NAD(P)H-quinone oxidoreductase subunit 6, chloroplastic (176 aa).

Helical transmembrane passes span 10–30 (FLLV…VLLP), 32–52 (PIYS…FYIL), 61–81 (AQLL…VMFM), 92–112 (LWTV…ISLI), and 152–172 (FFLP…GAIA).

It belongs to the complex I subunit 6 family. In terms of assembly, NDH is composed of at least 16 different subunits, 5 of which are encoded in the nucleus.

The protein resides in the plastid. It localises to the chloroplast thylakoid membrane. It catalyses the reaction a plastoquinone + NADH + (n+1) H(+)(in) = a plastoquinol + NAD(+) + n H(+)(out). The enzyme catalyses a plastoquinone + NADPH + (n+1) H(+)(in) = a plastoquinol + NADP(+) + n H(+)(out). In terms of biological role, NDH shuttles electrons from NAD(P)H:plastoquinone, via FMN and iron-sulfur (Fe-S) centers, to quinones in the photosynthetic chain and possibly in a chloroplast respiratory chain. The immediate electron acceptor for the enzyme in this species is believed to be plastoquinone. Couples the redox reaction to proton translocation, and thus conserves the redox energy in a proton gradient. This Solanum tuberosum (Potato) protein is NAD(P)H-quinone oxidoreductase subunit 6, chloroplastic (ndhG).